A 448-amino-acid polypeptide reads, in one-letter code: FAD-dependent monooxygenase srdH (448 aa).

Residues Glu-32 and Arg-107 each coordinate FAD. Residue Gln-227 is part of the active site. Asp-313 is a binding site for FAD.

It belongs to the paxM FAD-dependent monooxygenase family. Requires FAD as cofactor.

In terms of biological role, highly reducing polyketide synthase; part of the gene cluster that mediates the biosynthesis of sordarial, a salicylic aldehyde structurally related to the phytotoxin pyriculol. The most interesting aspect of this pathway is formation of an aromatic product from the highly reducing polyketide synthase srdA. SrdA synthesizes a reduced polyketide chain from one molecule of acetyl-CoA and five molecules of malonyl-CoA. The polyketide chain is then reductively released as an aldehyde. The oxidoreductases srdC, srdD and srdE then oxidize one of the hydroxy groups to facilitate the intramolecular aldol condensation, followed by dehydration to yield a salicylic aldehyde. This aldehyde can undergo facile reduction by endogenous reductases to yield the alcohol 1-hydroxy-2-hydroxymethyl-3-pent-1,3-dienylbenzene. The flavin-dependent srdI counteract against the propensity of the aldehydes to be reduced under physiological conditions and is responsible for reoxidizing 1-hydroxy-2-hydroxymethyl-3-pent-1,3-dienylbenzene back to the salicylic aldehyde. This salicylic aldehyde is then selectively epoxidized by the cupin-domain-containing oxidoreductase srdB to yield the epoxide, which can be hydrolyzed stereoselectively by the hydrolase srdG to give the final product sordarial. This chain is FAD-dependent monooxygenase srdH, found in Neurospora crassa (strain ATCC 24698 / 74-OR23-1A / CBS 708.71 / DSM 1257 / FGSC 987).